The sequence spans 133 residues: Putative biopolymer transport protein ExbD-like 1 (133 aa).

Residues 1-15 are Cytoplasmic-facing; that stretch reads MNYDNYWDEDKPELN. The helical transmembrane segment at 16–32 threads the bilayer; sequence ITPLVDVMLVLLAILMV. Residues 33-133 are Periplasmic-facing; that stretch reads TTPTLTYKEE…FLKVSLITSP (101 aa).

Belongs to the ExbD/TolR family.

Its subcellular location is the cell inner membrane. This chain is Putative biopolymer transport protein ExbD-like 1, found in Helicobacter pylori (strain J99 / ATCC 700824) (Campylobacter pylori J99).